The chain runs to 648 residues: ATPase family AAA domain-containing protein 3B (648 aa).

2 disordered regions span residues 1–54 (MSWL…DPTG) and 111–134 (QAEE…QYQD). N-acetylserine is present on Ser2. Residues 2-246 (SWLFGVNKGP…FRAFVTDRDK (245 aa)) lie on the Mitochondrial intermembrane side of the membrane. The segment covering 17-26 (GPPPPLPPAQ) has biased composition (pro residues). 2 stretches are compositionally biased toward basic and acidic residues: residues 32 to 48 (GGDR…DKWS) and 111 to 125 (QAEE…ETRQ). Positions 69 to 214 (RYAKEALNLA…DIIREQIRLK (146 aa)) form a coiled coil. Residues 247 to 264 (VTATVAGLTLLAVGVYSA) constitute an intramembrane region (helical). Over 265-648 (KNATAVTGRF…PFCPPGHPLL (384 aa)) the chain is Mitochondrial intermembrane. 352 to 359 (GPPGTGKT) is a binding site for ATP. Residues Lys427 and Lys495 each carry the N6-acetyllysine modification.

It belongs to the AAA ATPase family. Forms heterooligomers with ATAD3A. Interacts with components of the mitochondrial ribosome, including MRPL11 and MRPS18B, and with other proteins involved in mitochondrial RNA metabolism, possibly via interaction with ATAD3A. Interacts with GADD45GIP1. As to expression, tends to be down-regulated in differentiated cells and re-expressed in pluripotent stem cells or cancer cells (at protein level).

The protein localises to the mitochondrion inner membrane. Functionally, may play a role in a mitochondrial network organization typical for stem cells, characterized by reduced mitochondrial metabolism, low mtDNA copies and fragmentated mitochondrial network. May act by suppressing ATAD3A function, interfering with ATAD3A interaction with matrix nucleoid complexes. This Homo sapiens (Human) protein is ATPase family AAA domain-containing protein 3B (ATAD3B).